The sequence spans 75 residues: Translation initiation factor IF-1, chloroplastic (75 aa).

Belongs to the IF-1 family. As to quaternary structure, component of the 30S ribosomal translation pre-initiation complex which assembles on the 30S ribosome in the order IF-2 and IF-3, IF-1 and N-formylmethionyl-tRNA(fMet); mRNA recruitment can occur at any time during PIC assembly.

It is found in the plastid. The protein resides in the chloroplast. Functionally, one of the essential components for the initiation of protein synthesis. Stabilizes the binding of IF-2 and IF-3 on the 30S subunit to which N-formylmethionyl-tRNA(fMet) subsequently binds. Helps modulate mRNA selection, yielding the 30S pre-initiation complex (PIC). Upon addition of the 50S ribosomal subunit IF-1, IF-2 and IF-3 are released leaving the mature 70S translation initiation complex. This is Translation initiation factor IF-1, chloroplastic (infA) from Cucumis sativus (Cucumber).